A 119-amino-acid polypeptide reads, in one-letter code: uncharacterized protein (119 aa).

Residues 67-119 (LGLKEVQKKSNEGLNEVQGVADINKQKRPANSQDSSSVEGDIQNFLEKVTGKN) are disordered. Residues 95–104 (PANSQDSSSV) are compositionally biased toward polar residues.

This is an uncharacterized protein from Anabaena variabilis.